The following is a 354-amino-acid chain: GTPase Obg (354 aa).

Positions 1 to 159 constitute an Obg domain; the sequence is MKFVDEVKIH…RDLVLELKLL (159 aa). The OBG-type G domain occupies 160–333; it reads ADVGIVGYPN…LLDAVGRALF (174 aa). Residues 166-173, 191-195, 212-215, 283-286, and 314-316 each bind GTP; these read GYPNAGKS, FTTLT, DIPG, TKID, and SAV. S173 and T193 together coordinate Mg(2+).

It belongs to the TRAFAC class OBG-HflX-like GTPase superfamily. OBG GTPase family. Monomer. Requires Mg(2+) as cofactor.

It is found in the cytoplasm. In terms of biological role, an essential GTPase which binds GTP, GDP and possibly (p)ppGpp with moderate affinity, with high nucleotide exchange rates and a fairly low GTP hydrolysis rate. Plays a role in control of the cell cycle, stress response, ribosome biogenesis and in those bacteria that undergo differentiation, in morphogenesis control. In Anaeromyxobacter dehalogenans (strain 2CP-C), this protein is GTPase Obg.